The sequence spans 492 residues: 3-octaprenyl-4-hydroxybenzoate carboxy-lyase (492 aa).

Asn-177 serves as a coordination point for Mn(2+). Prenylated FMN-binding positions include 180–182 (IYR), 194–196 (RWL), and 199–200 (RG). Glu-243 provides a ligand contact to Mn(2+). Asp-292 (proton donor) is an active-site residue.

It belongs to the UbiD family. Homohexamer. Prenylated FMN is required as a cofactor. Mn(2+) serves as cofactor.

The protein localises to the cell membrane. The catalysed reaction is a 4-hydroxy-3-(all-trans-polyprenyl)benzoate + H(+) = a 2-(all-trans-polyprenyl)phenol + CO2. It participates in cofactor biosynthesis; ubiquinone biosynthesis. In terms of biological role, catalyzes the decarboxylation of 3-octaprenyl-4-hydroxy benzoate to 2-octaprenylphenol, an intermediate step in ubiquinone biosynthesis. The polypeptide is 3-octaprenyl-4-hydroxybenzoate carboxy-lyase (Neisseria meningitidis serogroup B (strain ATCC BAA-335 / MC58)).